The sequence spans 272 residues: 3-methyl-2-oxobutanoate hydroxymethyltransferase (272 aa).

Asp-43 and Asp-82 together coordinate Mg(2+). Residues 43-44 (DS), Asp-82, and Lys-112 contribute to the 3-methyl-2-oxobutanoate site. Glu-114 serves as a coordination point for Mg(2+). The active-site Proton acceptor is the Glu-179.

This sequence belongs to the PanB family. In terms of assembly, homodecamer; pentamer of dimers. It depends on Mg(2+) as a cofactor.

It is found in the cytoplasm. It catalyses the reaction 3-methyl-2-oxobutanoate + (6R)-5,10-methylene-5,6,7,8-tetrahydrofolate + H2O = 2-dehydropantoate + (6S)-5,6,7,8-tetrahydrofolate. The protein operates within cofactor biosynthesis; (R)-pantothenate biosynthesis; (R)-pantoate from 3-methyl-2-oxobutanoate: step 1/2. Catalyzes the reversible reaction in which hydroxymethyl group from 5,10-methylenetetrahydrofolate is transferred onto alpha-ketoisovalerate to form ketopantoate. The protein is 3-methyl-2-oxobutanoate hydroxymethyltransferase of Staphylococcus aureus (strain Mu3 / ATCC 700698).